The following is a 441-amino-acid chain: Arginine biosynthesis bifunctional protein ArgJ, mitochondrial (441 aa).

Residues 1 to 8 (MRISSTLL) constitute a mitochondrion transit peptide. Residues T177, K204, T215, E301, N436, and S441 each coordinate substrate. The Nucleophile role is filled by T215.

This sequence belongs to the ArgJ family. Heterodimer of an alpha and a beta chain. In terms of processing, the alpha and beta chains are autoproteolytically processed from a single precursor protein within the mitochondrion.

It is found in the mitochondrion matrix. The enzyme catalyses N(2)-acetyl-L-ornithine + L-glutamate = N-acetyl-L-glutamate + L-ornithine. It carries out the reaction L-glutamate + acetyl-CoA = N-acetyl-L-glutamate + CoA + H(+). Its pathway is amino-acid biosynthesis; L-arginine biosynthesis; L-ornithine and N-acetyl-L-glutamate from L-glutamate and N(2)-acetyl-L-ornithine (cyclic): step 1/1. It participates in amino-acid biosynthesis; L-arginine biosynthesis; N(2)-acetyl-L-ornithine from L-glutamate: step 1/4. In terms of biological role, catalyzes two activities which are involved in the cyclic version of arginine biosynthesis: the synthesis of acetylglutamate from glutamate and acetyl-CoA, and of ornithine by transacetylation between acetylornithine and glutamate. The sequence is that of Arginine biosynthesis bifunctional protein ArgJ, mitochondrial from Saccharomyces cerevisiae (strain Lalvin EC1118 / Prise de mousse) (Baker's yeast).